A 131-amino-acid chain; its full sequence is Transcription antitermination protein NusB (131 aa).

This sequence belongs to the NusB family.

Involved in transcription antitermination. Required for transcription of ribosomal RNA (rRNA) genes. Binds specifically to the boxA antiterminator sequence of the ribosomal RNA (rrn) operons. This chain is Transcription antitermination protein NusB, found in Bacillus pumilus (strain SAFR-032).